The primary structure comprises 35 residues: Turripeptide gsp9a (35 aa).

4-hydroxyproline is present on residues Pro3 and Pro4. 3 disulfide bridges follow: Cys7–Cys22, Cys12–Cys26, and Cys18–Cys33. 4-carboxyglutamate is present on residues Glu14 and Glu17.

As to expression, expressed by the venom duct.

It is found in the secreted. The polypeptide is Turripeptide gsp9a (Gemmula speciosa (Splendid gem-turris)).